The sequence spans 512 residues: Cytochrome P450 82C3 (512 aa).

The chain crosses the membrane as a helical span at residues 1–21 (MDTSLFSLFVSILVFVFIALF). Cys-451 is a heme binding site.

This sequence belongs to the cytochrome P450 family. It depends on heme as a cofactor.

It localises to the membrane. The polypeptide is Cytochrome P450 82C3 (CYP82C3) (Arabidopsis thaliana (Mouse-ear cress)).